A 249-amino-acid polypeptide reads, in one-letter code: Triosephosphate isomerase (249 aa).

The substrate site is built by Asn12 and Lys14. An N6-acetyllysine modification is found at Lys14. A 3'-nitrotyrosine modification is found at Tyr68. Ser80 is modified (phosphoserine). The active-site Electrophile is the His96. Residue Ser106 is modified to Phosphoserine. Lys142 is covalently cross-linked (Glycyl lysine isopeptide (Lys-Gly) (interchain with G-Cter in SUMO1)). Lys149 carries the N6-succinyllysine modification. Lys156 bears the N6-acetyllysine; alternate mark. At Lys156 the chain carries N6-succinyllysine; alternate. Ser159 is subject to Phosphoserine. Glu166 acts as the Proton acceptor in catalysis. Position 173 is a phosphothreonine (Thr173). An N6-acetyllysine; alternate modification is found at Lys194. The residue at position 194 (Lys194) is an N6-succinyllysine; alternate. Lys194 carries the post-translational modification N6-methyllysine; alternate. Ser198 bears the Phosphoserine mark. At Tyr209 the chain carries 3'-nitrotyrosine. Ser212 is modified (phosphoserine). Residue Thr214 is modified to Phosphothreonine. The residue at position 223 (Ser223) is a Phosphoserine. At Lys238 the chain carries N6-acetyllysine.

Belongs to the triosephosphate isomerase family. Homodimer.

It localises to the cytoplasm. The catalysed reaction is dihydroxyacetone phosphate = methylglyoxal + phosphate. It catalyses the reaction D-glyceraldehyde 3-phosphate = dihydroxyacetone phosphate. It functions in the pathway carbohydrate degradation; glycolysis; D-glyceraldehyde 3-phosphate from glycerone phosphate: step 1/1. Its pathway is carbohydrate biosynthesis; gluconeogenesis. Its function is as follows. Triosephosphate isomerase is an extremely efficient metabolic enzyme that catalyzes the interconversion between dihydroxyacetone phosphate (DHAP) and D-glyceraldehyde-3-phosphate (G3P) in glycolysis and gluconeogenesis. Functionally, it is also responsible for the non-negligible production of methylglyoxal a reactive cytotoxic side-product that modifies and can alter proteins, DNA and lipids. This Bos taurus (Bovine) protein is Triosephosphate isomerase (TPI1).